The sequence spans 366 residues: Histone-lysine N-methyltransferase SETD7 (366 aa).

3 MORN repeats span residues phenylalanine 36–threonine 58, leucine 59–valine 81, and phenylalanine 106–serine 128. In terms of domain architecture, SET spans glutamate 214–glycine 336. S-adenosyl-L-methionine-binding positions include alanine 226–glutamate 228, asparagine 296, histidine 297, and glutamate 356.

Belongs to the class V-like SAM-binding methyltransferase superfamily. Histone-lysine methyltransferase family. SET7 subfamily. Interacts with IPF1/PDX-1.

The protein resides in the nucleus. Its subcellular location is the chromosome. It carries out the reaction L-lysyl(4)-[histone H3] + S-adenosyl-L-methionine = N(6)-methyl-L-lysyl(4)-[histone H3] + S-adenosyl-L-homocysteine + H(+). The enzyme catalyses L-lysyl-[protein] + S-adenosyl-L-methionine = N(6)-methyl-L-lysyl-[protein] + S-adenosyl-L-homocysteine + H(+). In terms of biological role, histone methyltransferase that specifically monomethylates 'Lys-4' of histone H3. H3 'Lys-4' methylation represents a specific tag for epigenetic transcriptional activation. Plays a central role in the transcriptional activation of genes such as collagenase or insulin. Recruited by IPF1/PDX-1 to the insulin promoter, leading to activate transcription. Also has methyltransferase activity toward non-histone proteins such as CGAS, p53/TP53, TAF10, and possibly TAF7 by recognizing and binding the [KR]-[STA]-K in substrate proteins. Monomethylates 'Lys-189' of TAF10, leading to increase the affinity of TAF10 for RNA polymerase II. Monomethylates 'Lys-372' of p53/TP53, stabilizing p53/TP53 and increasing p53/TP53-mediated transcriptional activation. Monomethylates 'Lys-491' of CGAS, promoting interaction between SGF29 and CGAS. The polypeptide is Histone-lysine N-methyltransferase SETD7 (Setd7) (Mus musculus (Mouse)).